Here is a 395-residue protein sequence, read N- to C-terminus: S-adenosylmethionine synthase (395 aa).

An ATP-binding site is contributed by His-12. A Mg(2+)-binding site is contributed by Asp-14. A K(+)-binding site is contributed by Glu-40. Residues Glu-53 and Gln-96 each coordinate L-methionine. Residues 96–106 (QSKEIADAVNF) form a flexible loop region. ATP is bound by residues 174-176 (DGK), 242-243 (RF), Asp-251, 257-258 (RK), Ala-274, and Lys-278. Asp-251 provides a ligand contact to L-methionine. Position 282 (Lys-282) interacts with L-methionine.

This sequence belongs to the AdoMet synthase family. In terms of assembly, homotetramer; dimer of dimers. The cofactor is Mg(2+). K(+) is required as a cofactor.

Its subcellular location is the cytoplasm. The enzyme catalyses L-methionine + ATP + H2O = S-adenosyl-L-methionine + phosphate + diphosphate. It participates in amino-acid biosynthesis; S-adenosyl-L-methionine biosynthesis; S-adenosyl-L-methionine from L-methionine: step 1/1. Catalyzes the formation of S-adenosylmethionine (AdoMet) from methionine and ATP. The overall synthetic reaction is composed of two sequential steps, AdoMet formation and the subsequent tripolyphosphate hydrolysis which occurs prior to release of AdoMet from the enzyme. This Tropheryma whipplei (strain Twist) (Whipple's bacillus) protein is S-adenosylmethionine synthase.